The sequence spans 274 residues: 2-succinyl-6-hydroxy-2,4-cyclohexadiene-1-carboxylate synthase (274 aa).

It belongs to the AB hydrolase superfamily. MenH family. In terms of assembly, monomer.

The catalysed reaction is 5-enolpyruvoyl-6-hydroxy-2-succinyl-cyclohex-3-ene-1-carboxylate = (1R,6R)-6-hydroxy-2-succinyl-cyclohexa-2,4-diene-1-carboxylate + pyruvate. It functions in the pathway quinol/quinone metabolism; 1,4-dihydroxy-2-naphthoate biosynthesis; 1,4-dihydroxy-2-naphthoate from chorismate: step 3/7. It participates in quinol/quinone metabolism; menaquinone biosynthesis. In terms of biological role, catalyzes a proton abstraction reaction that results in 2,5-elimination of pyruvate from 2-succinyl-5-enolpyruvyl-6-hydroxy-3-cyclohexene-1-carboxylate (SEPHCHC) and the formation of 2-succinyl-6-hydroxy-2,4-cyclohexadiene-1-carboxylate (SHCHC). This is 2-succinyl-6-hydroxy-2,4-cyclohexadiene-1-carboxylate synthase from Yersinia enterocolitica serotype O:8 / biotype 1B (strain NCTC 13174 / 8081).